The primary structure comprises 308 residues: Cytochrome c biogenesis protein CcsA (308 aa).

Helical transmembrane passes span 17 to 37 (IISIVIPTHLMTLVYEIVGLC), 43 to 63 (GMITTFFCITGLLVTRWIYSG), 70 to 90 (LYESLMFLSWSFSLIHIVPYF), 142 to 162 (MLLSYAALLCGSLLSITLLVI), 213 to 233 (VIGLGFTLLTIGILSGAVWAN), 246 to 260 (ETWAFITWTVFAIYL), and 274 to 294 (AIVASMGFLIIWICYFGVNLL).

The protein belongs to the CcmF/CycK/Ccl1/NrfE/CcsA family. In terms of assembly, may interact with Ccs1.

It localises to the plastid. The protein localises to the chloroplast thylakoid membrane. Its function is as follows. Required during biogenesis of c-type cytochromes (cytochrome c6 and cytochrome f) at the step of heme attachment. This Nymphaea alba (White water-lily) protein is Cytochrome c biogenesis protein CcsA.